A 264-amino-acid polypeptide reads, in one-letter code: Small ribosomal subunit protein eS4 (264 aa).

Residues 42 to 104 (LPLVIIMRNR…TNENFRLLYD (63 aa)) form the S4 RNA-binding domain.

Belongs to the eukaryotic ribosomal protein eS4 family.

It localises to the cytoplasm. This is Small ribosomal subunit protein eS4 (RPS4) from Solanum tuberosum (Potato).